The primary structure comprises 185 residues: Peptide deformylase 2 (185 aa).

The Fe cation site is built by C108 and H150. E151 is a catalytic residue. A Fe cation-binding site is contributed by H154.

It belongs to the polypeptide deformylase family. Requires Fe(2+) as cofactor.

It carries out the reaction N-terminal N-formyl-L-methionyl-[peptide] + H2O = N-terminal L-methionyl-[peptide] + formate. Functionally, removes the formyl group from the N-terminal Met of newly synthesized proteins. Requires at least a dipeptide for an efficient rate of reaction. N-terminal L-methionine is a prerequisite for activity but the enzyme has broad specificity at other positions. The sequence is that of Peptide deformylase 2 from Nitrosomonas europaea (strain ATCC 19718 / CIP 103999 / KCTC 2705 / NBRC 14298).